The sequence spans 396 residues: Elongation factor Tu (396 aa).

Residues 10–206 enclose the tr-type G domain; it reads KPHVNVGTIG…ALDTYIPTPE (197 aa). Residues 19 to 26 are G1; the sequence is GHVDHGKT. GTP is bound at residue 19–26; the sequence is GHVDHGKT. Thr-26 provides a ligand contact to Mg(2+). A G2 region spans residues 60 to 64; that stretch reads GITIN. Positions 81–84 are G3; sequence DCPG. Residues 81-85 and 136-139 each bind GTP; these read DCPGH and NKCD. The tract at residues 136–139 is G4; the sequence is NKCD. The tract at residues 174–176 is G5; it reads SAK.

The protein belongs to the TRAFAC class translation factor GTPase superfamily. Classic translation factor GTPase family. EF-Tu/EF-1A subfamily. As to quaternary structure, monomer.

It is found in the cytoplasm. It catalyses the reaction GTP + H2O = GDP + phosphate + H(+). Its function is as follows. GTP hydrolase that promotes the GTP-dependent binding of aminoacyl-tRNA to the A-site of ribosomes during protein biosynthesis. This is Elongation factor Tu from Burkholderia cepacia (Pseudomonas cepacia).